Here is a 98-residue protein sequence, read N- to C-terminus: Feather beta keratin (98 aa).

Residue Ser-2 is modified to N-acetylserine.

Belongs to the avian keratin family. The avian keratins (F-ker, S-ker, C-ker and B-ker) are a complex mixture of very similar polypeptides.

The sequence is that of Feather beta keratin from Mycteria americana (Wood stork).